The chain runs to 174 residues: MAGANTAGVDKEMVTQALNAELQDKGFLLTSAEDIINWARTGSLHWMTFGLACCAVEMMHTSMPRYDAERFGIAPRASPRQSDVMIVAGTLTNKMAPALRKVYDQMPEPRYVISMGSCANGGGYYHYSYSVVRGCDRIVPVDIYVPGCPPTAEALLYGLMQLQRKIRRTGTLVR.

[4Fe-4S] cluster is bound by residues Cys-53, Cys-54, Cys-118, and Cys-148.

This sequence belongs to the complex I 20 kDa subunit family. In terms of assembly, NDH-1 is composed of 14 different subunits. Subunits NuoB, C, D, E, F, and G constitute the peripheral sector of the complex. [4Fe-4S] cluster serves as cofactor.

It is found in the cell inner membrane. It catalyses the reaction a quinone + NADH + 5 H(+)(in) = a quinol + NAD(+) + 4 H(+)(out). In terms of biological role, NDH-1 shuttles electrons from NADH, via FMN and iron-sulfur (Fe-S) centers, to quinones in the respiratory chain. Couples the redox reaction to proton translocation (for every two electrons transferred, four hydrogen ions are translocated across the cytoplasmic membrane), and thus conserves the redox energy in a proton gradient. The chain is NADH-quinone oxidoreductase subunit B from Ruegeria sp. (strain TM1040) (Silicibacter sp.).